We begin with the raw amino-acid sequence, 464 residues long: MILANAFCLFFFLDETLRSLASPSSPQGSELHGWRPQVDCVRANELCAAESNCSSRYRTLRQCLAGRDRNTMLANKECQAALEVLQESPLYDCRCKRGMKKELQCLQIYWSIHLGLTEGEEFYEASPYEPVTSRLSDIFRLASIFSGTGADPVVSAKSNHCLDAAKACNLNDNCKKLRSSYISICNREISPTERCNRRKCHKALRQFFDRVPSEYTYRMLFCSCQDQACAERRRQTILPSCSYEDKEKPNCLDLRSLCRTDHLCRSRLADFHANCRASYRTITSCPADNYQACLGSYAGMIGFDMTPNYVDSNPTGIVVSPWCNCRGSGNMEEECEKFLKDFTENPCLRNAIQAFGNGTDVNMSPKGPTFSATQAPRVEKTPSLPDDLSDSTSLGTSVITTCTSIQEQGLKANNSKELSMCFTELTTNISPGSKKVIKLYSGSCRARLSTALTALPLLMVTLAQ.

The N-terminal stretch at 1-21 (MILANAFCLFFFLDETLRSLA) is a signal peptide. 14 disulfide bridges follow: C40–C93, C47–C53, C63–C78, C95–C105, C161–C222, C168–C174, C185–C200, C195–C241, C224–C229, C251–C323, C258–C264, C275–C293, C285–C347, and C325–C335. N52 is a glycosylation site (N-linked (GlcNAc...) asparagine). An N-linked (GlcNAc...) asparagine glycan is attached at N357. The segment at 363 to 392 (MSPKGPTFSATQAPRVEKTPSLPDDLSDST) is disordered. Residues 381-392 (TPSLPDDLSDST) show a composition bias toward low complexity. Residue N413 is glycosylated (N-linked (GlcNAc...) asparagine). A lipid anchor (GPI-anchor amidated serine) is attached at S443. A propeptide spans 444–464 (CRARLSTALTALPLLMVTLAQ) (removed in mature form).

This sequence belongs to the GDNFR family. As to quaternary structure, interacts with NRTN ligand and RET: forms a 2:2:2 ternary complex composed of NRTN ligand, GFRA2 and RET receptor. Also forms a 4:4:4 tetrameric complex composed of 4 copies of NRTN ligand, GFRA2 and RET receptor, which prevents endocytosis of RET. Interacts with SORL1. As to expression, neurons of the superior cervical and dorsal root ganglia, and adult brain and testis. Low level in the substantia nigra, spleen and adrenal gland. Isoform 1, isoform 2 and isoform 3 are all expressed in brain, liver, ileum, spleen, heart and kidney. In brain, isoform 1 is most abundant, isoform 2 slightly less and isoform 3 is lowest. No significant levels of isoform 1, isoform 2 or isoform 3 expression in testis.

Its subcellular location is the cell membrane. Its function is as follows. Receptor for neurturin (NRTN), a growth factor that supports the survival of sympathetic neurons. NRTN-binding leads to autophosphorylation and activation of the RET receptor. Also able to mediate GDNF signaling through the RET tyrosine kinase receptor. In terms of biological role, participates in NRTN-induced 'Ser-727' phosphorylation of STAT3. The protein is GDNF family receptor alpha-2 of Mus musculus (Mouse).